The primary structure comprises 340 residues: Methionine import ATP-binding protein MetN (340 aa).

The 240-residue stretch at 6–245 (IEFEGITKVF…PQTNVAKRFV (240 aa)) folds into the ABC transporter domain. ATP is bound at residue 42–49 (GYSGAGKS).

The protein belongs to the ABC transporter superfamily. Methionine importer (TC 3.A.1.24) family. The complex is composed of two ATP-binding proteins (MetN), two transmembrane proteins (MetI) and a solute-binding protein (MetQ).

The protein localises to the cell membrane. It carries out the reaction L-methionine(out) + ATP + H2O = L-methionine(in) + ADP + phosphate + H(+). The enzyme catalyses D-methionine(out) + ATP + H2O = D-methionine(in) + ADP + phosphate + H(+). In terms of biological role, part of the ABC transporter complex MetNIQ involved in methionine import. Responsible for energy coupling to the transport system. The polypeptide is Methionine import ATP-binding protein MetN (Corynebacterium diphtheriae (strain ATCC 700971 / NCTC 13129 / Biotype gravis)).